The sequence spans 163 residues: Beta-carbonic anhydrase 1 (163 aa).

Residues C35, D37, H88, and C91 each contribute to the Zn(2+) site.

The protein belongs to the beta-class carbonic anhydrase family. Homotetramer. It depends on Zn(2+) as a cofactor.

It catalyses the reaction hydrogencarbonate + H(+) = CO2 + H2O. Catalyzes the reversible hydration of carbon dioxide to form bicarbonate. This chain is Beta-carbonic anhydrase 1, found in Mycobacterium bovis (strain ATCC BAA-935 / AF2122/97).